Reading from the N-terminus, the 116-residue chain is MSAVEQHIPNDQFLQKLTAFYRDSKIRGPKSVYVTMKPYDGRTKAMPKGSTFKEGDEISCIFRAKWGSKKIATEVKAKEVNKFHTQYSAIIVAQMVNLEKRKKTDDEKKKTGATKA.

Belongs to the SRP14 family. Heterodimer with ZK512.4/SRP9; binds RNA as heterodimer. Component of a signal recognition particle (SRP) complex that consists of a 7SL RNA molecule of 300 nucleotides and six protein subunits: srpa-72, srpa-68, SRP54, F37F2.2/SRP19, F25G6.8/SRP14 and ZK512.4/SRP9.

It localises to the cytoplasm. Functionally, component of the signal recognition particle (SRP) complex, a ribonucleoprotein complex that mediates the cotranslational targeting of secretory and membrane proteins to the endoplasmic reticulum (ER). F37F2.2/srpa-19 together with F25G6.8/srpa-14 and the Alu portion of the SRP RNA, constitutes the elongation arrest domain of SRP. The complex of F37F2.2/srpa-19 and F25G6.8/srpa-14 is required for SRP RNA binding. The sequence is that of Signal recognition particle 14 kDa protein from Caenorhabditis elegans.